The primary structure comprises 251 residues: UstYa family oxidase phomYb (251 aa).

The tract at residues 1–47 is disordered; that stretch reads MDGYSSKKPRSASPSRSSLTEVEEEERDTLLKTVSLEEEDKSGENGP. A helical membrane pass occupies residues 58–78; it reads AIGILMLSNIAFIAAFLTVFV. N-linked (GlcNAc...) asparagine glycosylation occurs at Asn-135. Short sequence motifs (HXXHC) lie at residues 160 to 164 and 187 to 191; these read HQLHC and HVSHC.

Belongs to the ustYa family.

It is found in the membrane. Its pathway is mycotoxin biosynthesis. Its function is as follows. UstYa family oxidase; part of the gene cluster that mediates the biosynthesis of the phomopsins, a group of hexapeptide mycotoxins which infects lupins and causes lupinosis disease in livestock. Within the pathway, phomYb is probably involved in the construction of the macrocyclic structure of the phomopsins. The pathway starts with the processing of the precursor phomA by several endopeptidases including kexin proteases as well as the cluster-specific S41 family peptidase phomP1 and the oligopeptidase phomG to produce 10 identical copies of the hexapeptide Tyr-Val-Ile-Pro-Ile-Asp. After being excised from the precursor peptide, the core peptides are cyclized and modified post-translationally by enzymes encoded within the gene cluster. The timing and order of proteolysis of the phomA precursor and PTMs are still unknown. Two tyrosinase-like enzymes, phomQ1 and phomQ2, catalyze the chlorination and hydroxylation of Tyr, respectively. PhomYb, is proposed to be involved in the construction of the macrocyclic structure. The other 4 ustYa family proteins may be involved in PTMs that generate the unique structure of phomopsin A. PhomYa is required for the hydroxylation of C-beta of Tyr. PhomYc, phomYd, and phomYe are responsible for the biosynthesis of 2,3-dehydroisoleucine (dIle), 2,3-dehydroaspartic acid (dAsp), and 3,4-dehydroproline (dPro), respectively. While dIle formation by phomYc is indispensable for the installation of dAsp by phomYd, the order of the other PTMs have not been elucidated yet. Most of the biosynthetic enzymes likely have broad substrate specificity, and thus, there might be a metabolic grid from a precursor to phomopsin A. The enzyme(s) responsible for the biosynthesis of 3,4-dehydrovaline (dVal) have also not been identified yet. Finally, phomM acts as an S-adenosylmethionine-dependent alpha-N-methyltransferase that catalyzes two successive N-methylation reactions, converting N-desmethyl-phomopsin A to phomopsin A and phomopsin A further to an N,N-dimethylated congener called phomopsin E. This chain is UstYa family oxidase phomYb, found in Diaporthe leptostromiformis (Lupinosis disease fungus).